We begin with the raw amino-acid sequence, 673 residues long: MGHVAPHASKKEHVAPHAAEKDHVAPHASKKEHVAPHAAEKGQVAPYAAGEGQVAPNAAGERPVAPYAAGEGQVAPYAAGEGQVAPYAAGEGQVAPYAAGEGQVAPYAAGEAQVAPHAAGEGRVAPHAAGDGQVEHCTVEDREEGHIGTTEQGHMSHYTSKLEHMAPPSAQTEAVVSYVAGERHAPPDCTVSGPAMCCSAEARQTTPDWTTTGPEISQGTLPGLTVLHVGGTWQTFAAEDEPCVTTLLSPVKPLSSSRKYAPYNLQIPSYSESEPQAHKGLSSETFGPCEPLHINQLPSSLLLKIFSNLSLNERCILASLVCKYWRDLCLDSQFWKQLDLSNRQQIKDNILEEIASRSQNITEINISDCFSVSDQGVCVVALKCPGLVKYTAYRCKQLSDISLIALAAHCPSLQKVHVGNQDKLSDEALIQMGRRCKELKDIHFGQCYKISDEGLIVIAKGCQKLQKIYMQENKLVSDESVKAFAEHCPGLQYVGFMGCSVTSEGVINLTKLKHLSSLDLRHITELDNETVMEIVKQCQHLTSLNLCLNRSINDRCVEVIAKEGRSLKELYLVTCKITDYALIAIGRYSKSIETVDVGWCKEITDYGAKQIAQSSKSIRYLGLMRCDKVNEATVEQLVQQYPHITFSTVLQDCKRTLERAYQMGWTPNASPAT.

The tract at residues 1–39 is disordered; the sequence is MGHVAPHASKKEHVAPHAAEKDHVAPHASKKEHVAPHAA. Residues 9-39 show a composition bias toward basic and acidic residues; sequence SKKEHVAPHAAEKDHVAPHASKKEHVAPHAA. The 48-residue stretch at 291–338 folds into the F-box domain; it reads PLHINQLPSSLLLKIFSNLSLNERCILASLVCKYWRDLCLDSQFWKQL.

It belongs to the FBXL17 family. Part of the SCF (SKP1-CUL1-F-box) E3 ubiquitin-protein ligase complex SCF(FBXL17). Interacts with BTB domain-containing proteins; specifically recognizes and binds a conserved degron of non-consecutive residues present at the interface of BTB dimers of aberrant composition. In terms of tissue distribution, expressed in the neuro-ectoderm of embryos.

The protein resides in the cytoplasm. Its subcellular location is the nucleus. In terms of biological role, substrate-recognition component of the SCF(FBXL17) E3 ubiquitin ligase complex, a key component of a quality control pathway required to ensure functional dimerization of BTB domain-containing proteins (dimerization quality control, DQC). FBXL17 specifically recognizes and binds a conserved degron of non-consecutive residues present at the interface of BTB dimers of aberrant composition: aberrant BTB dimer are then ubiquitinated by the SCF(FBXL17) complex and degraded by the proteasome. The ability of the SCF(FBXL17) complex to eliminate compromised BTB dimers is required for the differentiation and survival of neural crest and neuronal cells. The polypeptide is F-box/LRR-repeat protein 17 (Xenopus laevis (African clawed frog)).